A 415-amino-acid chain; its full sequence is Acetyl-CoA acetyltransferase 1 (415 aa).

The active-site Acyl-thioester intermediate is the C99. K239 is a CoA binding site. Residue A256 coordinates K(+). CoA is bound at residue S260. V357 is a binding site for K(+). Catalysis depends on proton acceptor residues H361 and C391.

It belongs to the thiolase-like superfamily. Thiolase family. Expressed in the vascular system of roots, cotyledons, young leaves, fully expanded leaves, stems, flowers, and funiculi of siliques.

It localises to the cytoplasm. The protein localises to the peroxisome. The enzyme catalyses 2 acetyl-CoA = acetoacetyl-CoA + CoA. It participates in metabolic intermediate biosynthesis; (R)-mevalonate biosynthesis; (R)-mevalonate from acetyl-CoA: step 1/3. Its function is as follows. Catalyzes the condensation of two molecules of acetyl-CoA to produce acetoacetyl-CoA. The sequence is that of Acetyl-CoA acetyltransferase 1 from Arabidopsis thaliana (Mouse-ear cress).